Reading from the N-terminus, the 982-residue chain is Protein phosphatase 1 regulatory subunit 12B (982 aa).

Basic and acidic residues predominate over residues 1–24 (MAELEHLGGKRAESARMRRAEQLR). Residues 1–50 (MAELEHLGGKRAESARMRRAEQLRRWRGSLTEQEPAERRGAGRQPLTRRG) are disordered. S29 carries the post-translational modification Phosphoserine. ANK repeat units follow at residues 57–86 (EDGA…DINT), 90–119 (DGLT…NVNQ), 123–152 (EGWT…SVGI), 216–245 (SGAT…ELNV), and 249–278 (DGWT…DMDI). 4 disordered regions span residues 342-517 (EETP…RESA), 556-579 (RTPH…SSTP), 606-864 (TDSS…EARE), and 918-948 (AQQK…KMSE). Over residues 362–374 (SEEEEGEDEASES) the composition is skewed to acidic residues. Residues 375–385 (ETEKEADKKPE) are compositionally biased toward basic and acidic residues. Over residues 389 to 401 (NHSNSESKSSITE) the composition is skewed to polar residues. A compositionally biased stretch (low complexity) spans 411-421 (FSASSARRFSS). The residue at position 445 (T445) is a Phosphothreonine. The span at 466–478 (SSIYRSSSSPRIS) shows a compositional bias: low complexity. Residues 482 to 491 (DNKDKERENK) are compositionally biased toward basic and acidic residues. Positions 623-632 (VRDEEAESLR) are enriched in basic and acidic residues. The segment covering 633–643 (KARSRQARQTR) has biased composition (basic residues). The residue at position 646 (T646) is a Phosphothreonine. Basic and acidic residues predominate over residues 656–680 (EAERTFSRSRAERQAQEQPREKPTD). A compositionally biased stretch (low complexity) spans 731–742 (TTPASPSTSRPS). Residues 743–755 (LYTSSHLLWTNRF) are compositionally biased toward polar residues. The segment covering 797–807 (ERRRPKERRRG) has biased composition (basic residues). T808 is subject to Phosphothreonine. Residues 824–836 (EEVKETWHERLSR) are compositionally biased toward basic and acidic residues. S839 carries the post-translational modification Phosphoserine. Over residues 840 to 849 (GGSNPTTSDS) the composition is skewed to polar residues. Basic and acidic residues-rich tracts occupy residues 850-864 (YGDR…EARE), 918-927 (AQQKQEKTSD), and 933-948 (EMEK…KMSE). A Phosphoserine modification is found at S947.

PP1 comprises a catalytic subunit, PPP1CA, PPP1CB or PPP1CC, and one or several targeting or regulatory subunits. PPP1R12B mediates binding to myosin. Isoform 3 and isoform 4 bind PPP1R12A, but not isoform 1 of PPP1R12B itself. Binds IL16. Detected in skeletal muscle, fetal and adult heart, brain, placenta, kidney, spleen, thymus, pancreas and lung. Isoform 3 and isoform 4 are heart specific.

The protein localises to the cytoplasm. The protein resides in the cytoskeleton. It localises to the stress fiber. Functionally, regulates myosin phosphatase activity. Augments Ca(2+) sensitivity of the contractile apparatus. This Homo sapiens (Human) protein is Protein phosphatase 1 regulatory subunit 12B (PPP1R12B).